Consider the following 101-residue polypeptide: Small ribosomal subunit protein uS14 (101 aa).

This sequence belongs to the universal ribosomal protein uS14 family. As to quaternary structure, part of the 30S ribosomal subunit. Contacts proteins S3 and S10.

Its function is as follows. Binds 16S rRNA, required for the assembly of 30S particles and may also be responsible for determining the conformation of the 16S rRNA at the A site. The sequence is that of Small ribosomal subunit protein uS14 from Haemophilus ducreyi (strain 35000HP / ATCC 700724).